The chain runs to 377 residues: Methionine import ATP-binding protein MetN 2 (377 aa).

The ABC transporter domain maps to I25 to L262. An ATP-binding site is contributed by G59 to S66.

Belongs to the ABC transporter superfamily. Methionine importer (TC 3.A.1.24) family. In terms of assembly, the complex is composed of two ATP-binding proteins (MetN), two transmembrane proteins (MetI) and a solute-binding protein (MetQ).

The protein resides in the cell inner membrane. The catalysed reaction is L-methionine(out) + ATP + H2O = L-methionine(in) + ADP + phosphate + H(+). It carries out the reaction D-methionine(out) + ATP + H2O = D-methionine(in) + ADP + phosphate + H(+). Its function is as follows. Part of the ABC transporter complex MetNIQ involved in methionine import. Responsible for energy coupling to the transport system. The sequence is that of Methionine import ATP-binding protein MetN 2 from Rhodopseudomonas palustris (strain ATCC BAA-98 / CGA009).